The sequence spans 457 residues: MRIHILGICGTFMGGLAMLARQLGHEVTGSDANVYPPMSTLLEKQGIELIQGYDASQLEPQPDLVIIGNAMTRGNPCVEAVLEKNIPYMSGPQWLHDFVLRDRWVLAVAGTHGKTTTAGMATWILEQCGYKPGFVIGGVPGNFEVSAHLGESDFFVIEADEYDCAFFDKRSKFVHYCPRTLILNNLEFDHADIFDDLKAIQKQFHHLVRIVPGQGRIIWPENDINLKQTMAMGCWSEQELVGEQGHWQAKKLTTDASEWEVLLDGEKVGEVKWSLVGEHNMHNGLMAIAAARHVGVAPADAANALGSFINARRRLELRGEANGVTVYDDFAHHPTAILATLAALRGKVGGTARIIAVLEPRSNTMKMGICKDDLAPSLGRADEVFLLQPAHIPWQVAEVAEACVQPAHWSGDVDTLADMVVKTAQPGDHILVMSNGGFGGIHQKLLDGLAKKAEAAQ.

ATP is bound at residue 110-116; it reads GTHGKTT.

The protein belongs to the MurCDEF family. Mpl subfamily. It depends on Mg(2+) as a cofactor.

It localises to the secreted. It catalyses the reaction UDP-N-acetyl-alpha-D-muramate + L-alanyl-gamma-D-glutamyl-meso-2,6-diaminopimelate + ATP = UDP-N-acetyl-alpha-D-muramoyl-L-alanyl-gamma-D-glutamyl-meso-2,6-diaminopimelate + ADP + phosphate + H(+). It functions in the pathway cell wall biogenesis; peptidoglycan recycling. Reutilizes the intact tripeptide L-alanyl-gamma-D-glutamyl-meso-diaminopimelate by linking it to UDP-N-acetylmuramate. The enzyme can also use the tetrapeptide L-alanyl-gamma-D-glutamyl-meso-2,6-diaminoheptanedioyl-D-alanine or the pentapeptide L-alanyl-gamma-D-glutamyl-meso-2,6-diaminoheptandioyl-D-alanyl-D-alanine in vivo and in vitro. This Escherichia coli (strain K12) protein is UDP-N-acetylmuramate--L-alanyl-gamma-D-glutamyl-meso-2,6-diaminoheptandioate ligase.